Reading from the N-terminus, the 509-residue chain is Bifunctional purine biosynthesis protein PurH (509 aa).

The region spanning 1 to 144 is the MGS-like domain; that stretch reads MKRALISVSD…KNYAAVTVVV (144 aa).

This sequence belongs to the PurH family.

It carries out the reaction (6R)-10-formyltetrahydrofolate + 5-amino-1-(5-phospho-beta-D-ribosyl)imidazole-4-carboxamide = 5-formamido-1-(5-phospho-D-ribosyl)imidazole-4-carboxamide + (6S)-5,6,7,8-tetrahydrofolate. The catalysed reaction is IMP + H2O = 5-formamido-1-(5-phospho-D-ribosyl)imidazole-4-carboxamide. Its pathway is purine metabolism; IMP biosynthesis via de novo pathway; 5-formamido-1-(5-phospho-D-ribosyl)imidazole-4-carboxamide from 5-amino-1-(5-phospho-D-ribosyl)imidazole-4-carboxamide (10-formyl THF route): step 1/1. It functions in the pathway purine metabolism; IMP biosynthesis via de novo pathway; IMP from 5-formamido-1-(5-phospho-D-ribosyl)imidazole-4-carboxamide: step 1/1. The polypeptide is Bifunctional purine biosynthesis protein PurH (Listeria monocytogenes serotype 4b (strain F2365)).